The primary structure comprises 688 residues: Glycine--tRNA ligase beta subunit (688 aa).

The protein belongs to the class-II aminoacyl-tRNA synthetase family. Tetramer of two alpha and two beta subunits.

The protein localises to the cytoplasm. The catalysed reaction is tRNA(Gly) + glycine + ATP = glycyl-tRNA(Gly) + AMP + diphosphate. This Desulforudis audaxviator (strain MP104C) protein is Glycine--tRNA ligase beta subunit.